The following is a 181-amino-acid chain: Putative poly [ADP-ribose] polymerase-like 100L (181 aa).

The PARP catalytic domain maps to 1–181 (MDNLKEEETN…KIKYIIHITK (181 aa)).

It catalyses the reaction NAD(+) + (ADP-D-ribosyl)n-acceptor = nicotinamide + (ADP-D-ribosyl)n+1-acceptor + H(+).. The chain is Putative poly [ADP-ribose] polymerase-like 100L from Invertebrate iridescent virus 6 (IIV-6).